The primary structure comprises 2065 residues: WD repeat-containing protein 81 (2065 aa).

The region spanning 325–617 is the BEACH domain; it reads LCRNCQDELK…EPPHFGRVNV (293 aa). Disordered stretches follow at residues 1082 to 1111, 1156 to 1230, 1271 to 1290, and 1595 to 1642; these read EEEEYECDDRRSSNATSSGKVGGGSGGGSG, TTVG…VEDR, GEKNMEEEETEHDPLEDSEE, and ASPG…GGDI. Residues 1101-1111 show a composition bias toward gly residues; that stretch reads KVGGGSGGGSG. The segment covering 1156–1169 has biased composition (polar residues); sequence TTVGTKQQNQSTAN. Acidic residues predominate over residues 1213–1228; sequence DGEDGGELEDEEETVE. Over residues 1624–1637 the composition is skewed to low complexity; it reads SRSPFPAPSSTSTP. WD repeat units follow at residues 1767-1806, 1813-1853, 1906-1945, 1948-1986, and 2035-2065; these read GHSGTAKCLAPLAGEDYFLSGSKDKTVRLWPLYNHGDGTR, TYTE…NIRC, LSAGLIRCLAVSPGGRTIAAGFSTGFIVLLDARTGLVLRG, GHEGDILQMKAAEGNLLVSSSSDHTLTVWKDVEHKPLHQ, and NFRGTLTSLSVLPTKRLLLLGSDNGAIRLLA.

The protein belongs to the WD repeat WDR81 family. In terms of tissue distribution, widely expressed.

It is found in the early endosome membrane. It localises to the late endosome membrane. Its subcellular location is the lysosome membrane. The protein localises to the cytoplasmic vesicle. The protein resides in the autophagosome membrane. It is found in the mitochondrion. It localises to the cytoplasm. Its subcellular location is the cytosol. Functionally, functions as a negative regulator of the PI3 kinase/PI3K activity associated with endosomal membranes. By modifying the phosphatidylinositol 3-phosphate/PtdInsP3 content of endosomal membranes may regulate endosome fusion, recycling, sorting and early to late endosome transport. May also play a role in aggrephagy, the macroautophagic degradation of ubiquitinated protein aggregates. May also be involved in maintenance of normal mitochondrial structure and organization. This Danio rerio (Zebrafish) protein is WD repeat-containing protein 81 (wdr81).